Reading from the N-terminus, the 233-residue chain is Putative peroxiredoxin (233 aa).

Positions 41 to 200 constitute a Thioredoxin domain; that stretch reads AQIGKEAPEF…TIRIVKAIQF (160 aa). Cysteine 87 serves as the catalytic Cysteine sulfenic acid (-SOH) intermediate.

It belongs to the peroxiredoxin family. AhpC/Prx1 subfamily. In terms of assembly, homodimer; disulfide-linked, upon oxidation.

The protein localises to the cell membrane. The catalysed reaction is a hydroperoxide + [thioredoxin]-dithiol = an alcohol + [thioredoxin]-disulfide + H2O. Its function is as follows. Thiol-specific peroxidase that catalyzes the reduction of hydrogen peroxide and organic hydroperoxides to water and alcohols, respectively. Plays a role in cell protection against oxidative stress by detoxifying peroxides and as sensor of hydrogen peroxide-mediated signaling events. This chain is Putative peroxiredoxin, found in Entamoeba histolytica (strain ATCC 30459 / HM-1:IMSS / ABRM).